The chain runs to 240 residues: tRNA (guanine-N(1)-)-methyltransferase (240 aa).

S-adenosyl-L-methionine-binding positions include Gly-111 and 130 to 135; that span reads IGDYVI.

The protein belongs to the RNA methyltransferase TrmD family. As to quaternary structure, homodimer.

It localises to the cytoplasm. The enzyme catalyses guanosine(37) in tRNA + S-adenosyl-L-methionine = N(1)-methylguanosine(37) in tRNA + S-adenosyl-L-homocysteine + H(+). Its function is as follows. Specifically methylates guanosine-37 in various tRNAs. This Mycoplasma mycoides subsp. mycoides SC (strain CCUG 32753 / NCTC 10114 / PG1) protein is tRNA (guanine-N(1)-)-methyltransferase.